Here is an 892-residue protein sequence, read N- to C-terminus: Alanine--tRNA ligase (892 aa).

Zn(2+) contacts are provided by histidine 565, histidine 569, cysteine 678, and histidine 682. The interval 857–876 (GGKGGGGRPDMAQAGGPDGA) is disordered.

The protein belongs to the class-II aminoacyl-tRNA synthetase family. Zn(2+) is required as a cofactor.

The protein resides in the cytoplasm. The catalysed reaction is tRNA(Ala) + L-alanine + ATP = L-alanyl-tRNA(Ala) + AMP + diphosphate. In terms of biological role, catalyzes the attachment of alanine to tRNA(Ala) in a two-step reaction: alanine is first activated by ATP to form Ala-AMP and then transferred to the acceptor end of tRNA(Ala). Also edits incorrectly charged Ser-tRNA(Ala) and Gly-tRNA(Ala) via its editing domain. This chain is Alanine--tRNA ligase, found in Bradyrhizobium diazoefficiens (strain JCM 10833 / BCRC 13528 / IAM 13628 / NBRC 14792 / USDA 110).